The chain runs to 507 residues: Proton-coupled zinc antiporter SLC30A1 (507 aa).

At 1–10 (MGCWGRNRGR) the chain is on the cytoplasmic side. The chain crosses the membrane as a helical span at residues 11-31 (LLCMLLLTFMFMVLEVVVSRV). The Extracellular portion of the chain corresponds to 32-35 (TASL). Residues 36 to 56 (AMLSDSFHMLSDVLALVVALV) traverse the membrane as a helical segment. His-43 and Asp-47 together coordinate Zn(2+). Over 57-78 (AERFARRTHATQKNTFGWIRAE) the chain is Cytoplasmic. The chain crosses the membrane as a helical span at residues 79 to 99 (VMGALVNAIFLTGLCFAILLE). Residues 100 to 113 (AVERFIEPHEMQQP) lie on the Extracellular side of the membrane. A helical membrane pass occupies residues 114 to 134 (LVVLSVGVAGLLVNVLGLCLF). At 135–247 (HHHSGEGQGA…RAGQLNMRGV (113 aa)) the chain is on the cytoplasmic side. The interval 140–218 (EGQGAGHGHS…EKLRSDDPVD (79 aa)) is disordered. The segment at 145 to 156 (GHGHSHGHGHGH) is 6 X 2 AA approximate repeats of H-G. A compositionally biased stretch (basic residues) spans 147 to 165 (GHSHGHGHGHLAKGARKAG). The span at 188-200 (TNTLVANTSNSNG) shows a compositional bias: polar residues. Basic and acidic residues predominate over residues 204-215 (DQAEPEKLRSDD). A helical transmembrane segment spans residues 248-268 (FLHVLGDALGSVIVVVNALVF). 2 residues coordinate Zn(2+): His-250 and Asp-254. The Extracellular portion of the chain corresponds to 269–307 (YFSWKGCTEDDFCVNPCFPDPCKSSVELMNSTQAPMHEA). Asn-298 carries N-linked (GlcNAc...) asparagine glycosylation. A helical membrane pass occupies residues 308–328 (GPCWVLYLDPTLCIIMVCILL). Residues 329-507 (YTTYPLLKES…VPNKQPESSL (179 aa)) are Cytoplasmic-facing. Ser-506 is subject to Phosphoserine.

Belongs to the cation diffusion facilitator (CDF) transporter (TC 2.A.4) family. SLC30A subfamily. Homodimer. Interacts with TMEM163. Interacts and forms a complex with TMC6 and TMC8; the interaction regulates zinc transport into the ER. As to expression, widely expressed. Detected in duodenum and jejunum but not in ileum and colon (at protein level). Expressed by neuroglial cells (at protein level).

Its subcellular location is the cell membrane. It is found in the basolateral cell membrane. The protein resides in the cytoplasmic vesicle membrane. The protein localises to the cytoplasm. It localises to the endoplasmic reticulum membrane. Its subcellular location is the golgi apparatus membrane. It is found in the nucleus membrane. The enzyme catalyses Zn(2+)(in) + 2 H(+)(out) = Zn(2+)(out) + 2 H(+)(in). Calcium-dependent. Functionally, zinc ion:proton antiporter that could function at the plasma membrane mediating zinc efflux from cells against its electrochemical gradient protecting them from intracellular zinc accumulation and toxicity. Alternatively, could prevent the transport to the plasma membrane of CACNB2, the L-type calcium channels regulatory subunit, through a yet to be defined mechanism. By modulating the expression of these channels at the plasma membrane, could prevent calcium and zinc influx into cells. By the same mechanism, could also prevent L-type calcium channels-mediated heavy metal influx into cells. In some cells, could also function as a zinc ion:proton antiporter mediating zinc entry into the lumen of cytoplasmic vesicles. In macrophages, can increase zinc ions concentration into the lumen of cytoplasmic vesicles containing engulfed bacteria and could help inactivate them. Forms a complex with TMC6/EVER1 and TMC8/EVER2 at the ER membrane of keratynocytes which facilitates zinc uptake into the ER. Down-regulates the activity of transcription factors induced by zinc and cytokines. The sequence is that of Proton-coupled zinc antiporter SLC30A1 from Rattus norvegicus (Rat).